We begin with the raw amino-acid sequence, 208 residues long: Uracil phosphoribosyltransferase (208 aa).

Residues R78, R103, and D130–S138 each bind 5-phospho-alpha-D-ribose 1-diphosphate. Uracil-binding positions include I193 and G198–A200. D199 contacts 5-phospho-alpha-D-ribose 1-diphosphate.

This sequence belongs to the UPRTase family. Mg(2+) serves as cofactor.

The catalysed reaction is UMP + diphosphate = 5-phospho-alpha-D-ribose 1-diphosphate + uracil. It functions in the pathway pyrimidine metabolism; UMP biosynthesis via salvage pathway; UMP from uracil: step 1/1. Its activity is regulated as follows. Allosterically activated by GTP. Catalyzes the conversion of uracil and 5-phospho-alpha-D-ribose 1-diphosphate (PRPP) to UMP and diphosphate. This is Uracil phosphoribosyltransferase from Tolumonas auensis (strain DSM 9187 / NBRC 110442 / TA 4).